Here is a 292-residue protein sequence, read N- to C-terminus: NAD kinase (292 aa).

Catalysis depends on D73, which acts as the Proton acceptor. NAD(+) contacts are provided by residues 73–74, 147–148, H158, R175, D177, 188–193, and Q247; these read DG, NE, and TAYSLS.

This sequence belongs to the NAD kinase family. A divalent metal cation is required as a cofactor.

Its subcellular location is the cytoplasm. The catalysed reaction is NAD(+) + ATP = ADP + NADP(+) + H(+). In terms of biological role, involved in the regulation of the intracellular balance of NAD and NADP, and is a key enzyme in the biosynthesis of NADP. Catalyzes specifically the phosphorylation on 2'-hydroxyl of the adenosine moiety of NAD to yield NADP. The polypeptide is NAD kinase (Serratia proteamaculans (strain 568)).